We begin with the raw amino-acid sequence, 1016 residues long: Primary septum glucan endo-1,3-beta-D-glucosidase (1016 aa).

A signal peptide spans 1-20 (MSSYLRSFIFGLLTISLAQC). N-linked (GlcNAc...) asparagine glycosylation occurs at Asn-37. The tract at residues 45-272 (TNVFDSVVDT…NGYIQIAKIP (228 aa)) is beta-sandwich subdomain. The GH81 domain occupies 45–741 (TNVFDSVVDT…AYAAGLWAND (697 aa)). Residues 273–364 (LGDGTAEALY…AGNSITFAEA (92 aa)) form an alpha/beta subdomain region. A (alpha/beta)6 barrel subdomain region spans residues 379–741 (GQIGYSEEAL…AYAAGLWAND (363 aa)). The active site involves Asp-492. Residues His-496, Asp-567, Glu-569, Glu-573, and Tyr-650 each coordinate (1,3-beta-D-glucosyl)n. Catalysis depends on residues Glu-569 and Glu-573. The tract at residues 748-1016 (SSSSTTTTST…GCSNGALVAA (269 aa)) is required for catalytic activity against insoluble beta-glucan and to restrict localization of the enzyme to the cell septum. Residues 844 to 872 (SSTTSSITPTPTTTSSITPTPTTTSTTTT) are disordered.

Belongs to the glycosyl hydrolase 81 family.

Its subcellular location is the cell septum. The enzyme catalyses Hydrolysis of (1-&gt;3)-beta-D-glucosidic linkages in (1-&gt;3)-beta-D-glucans.. In terms of biological role, cleaves internal linkages in 1,3-beta-glucan. Has a role in cell separation where it is required for the degradation of the primary septum after completion of cytokinesis. This Schizosaccharomyces pombe (strain 972 / ATCC 24843) (Fission yeast) protein is Primary septum glucan endo-1,3-beta-D-glucosidase.